A 708-amino-acid polypeptide reads, in one-letter code: Probable GTP diphosphokinase RSH3, chloroplastic (708 aa).

2 disordered regions span residues 1 to 50 and 109 to 134; these read MSLP…AAGG and HSPVSVFQGPSSSPAASRSPPASWLA. The transit peptide at 1–58 directs the protein to the chloroplast; that stretch reads MSLPAISLYTSPPPGAVYSSEFDPSSRGSSPPCSTAPPSTSHRPPAAAGGLSCLFSSP. Composition is skewed to low complexity over residues 29–41 and 118–131; these read SSPPCSTAPPSTS and PSSSPAASRSPPAS. Positions 233–337 constitute an HD domain; it reads YLQHCVETAV…IKLADRVHNM (105 aa).

This sequence belongs to the RelA/SpoT family.

The protein resides in the plastid. The protein localises to the chloroplast. The catalysed reaction is GTP + ATP = guanosine 3'-diphosphate 5'-triphosphate + AMP. Probable ppGpp (guanosine 3'-diphosphate 5'-diphosphate) synthetase that may be involved in a rapid plant ppGpp-mediated response to pathogens and other stresses. This chain is Probable GTP diphosphokinase RSH3, chloroplastic (RSH3), found in Oryza sativa subsp. japonica (Rice).